The chain runs to 293 residues: Formamidopyrimidine-DNA glycosylase (293 aa).

The active-site Schiff-base intermediate with DNA is P2. E3 (proton donor) is an active-site residue. The active-site Proton donor; for beta-elimination activity is K58. The DNA site is built by H104, R123, and R166. The FPG-type zinc finger occupies 257–293 (AVYDREGEPCRSKGCDGVVKRFVQNGRSTFWCPKCQK). R283 acts as the Proton donor; for delta-elimination activity in catalysis.

Belongs to the FPG family. Monomer. It depends on Zn(2+) as a cofactor.

It catalyses the reaction Hydrolysis of DNA containing ring-opened 7-methylguanine residues, releasing 2,6-diamino-4-hydroxy-5-(N-methyl)formamidopyrimidine.. It carries out the reaction 2'-deoxyribonucleotide-(2'-deoxyribose 5'-phosphate)-2'-deoxyribonucleotide-DNA = a 3'-end 2'-deoxyribonucleotide-(2,3-dehydro-2,3-deoxyribose 5'-phosphate)-DNA + a 5'-end 5'-phospho-2'-deoxyribonucleoside-DNA + H(+). Its function is as follows. Involved in base excision repair of DNA damaged by oxidation or by mutagenic agents. Acts as a DNA glycosylase that recognizes and removes damaged bases. Has a preference for oxidized purines, such as 7,8-dihydro-8-oxoguanine (8-oxoG). Has AP (apurinic/apyrimidinic) lyase activity and introduces nicks in the DNA strand. Cleaves the DNA backbone by beta-delta elimination to generate a single-strand break at the site of the removed base with both 3'- and 5'-phosphates. This is Formamidopyrimidine-DNA glycosylase from Rhodopseudomonas palustris (strain BisB18).